The following is a 292-amino-acid chain: Glyoxylase B2 (292 aa).

Residues H72, H74, D76, H77, H148, and D166 each contribute to the Zn(2+) site. Substrate is bound by residues 175 to 181 (TARCDFP), 208 to 210 (HDY), and 284 to 287 (KIPL). Zn(2+) is bound at residue H208.

It belongs to the metallo-beta-lactamase superfamily. Glyoxalase II family. Zn(2+) is required as a cofactor.

The sequence is that of Glyoxylase B2 (gloB2) from Dictyostelium discoideum (Social amoeba).